We begin with the raw amino-acid sequence, 263 residues long: N-acyl homoserine lactonase AttM (263 aa).

Zn(2+)-binding residues include histidine 103, histidine 105, aspartate 107, histidine 108, histidine 180, aspartate 202, and histidine 247.

This sequence belongs to the metallo-beta-lactamase superfamily. Requires Zn(2+) as cofactor.

It catalyses the reaction an N-acyl-L-homoserine lactone + H2O = an N-acyl-L-homoserine + H(+). This chain is N-acyl homoserine lactonase AttM (attM), found in Rhizobium radiobacter (Agrobacterium tumefaciens).